We begin with the raw amino-acid sequence, 185 residues long: Small ribosomal subunit protein uS5 (185 aa).

The 64-residue stretch at 18-81 (FVDKLVHINR…ESAKRALIRV (64 aa)) folds into the S5 DRBM domain.

Belongs to the universal ribosomal protein uS5 family. As to quaternary structure, part of the 30S ribosomal subunit. Contacts proteins S4 and S8.

With S4 and S12 plays an important role in translational accuracy. Its function is as follows. Located at the back of the 30S subunit body where it stabilizes the conformation of the head with respect to the body. The polypeptide is Small ribosomal subunit protein uS5 (Azorhizobium caulinodans (strain ATCC 43989 / DSM 5975 / JCM 20966 / LMG 6465 / NBRC 14845 / NCIMB 13405 / ORS 571)).